The primary structure comprises 142 residues: ATP synthase epsilon chain (142 aa).

Belongs to the ATPase epsilon chain family. In terms of assembly, F-type ATPases have 2 components, CF(1) - the catalytic core - and CF(0) - the membrane proton channel. CF(1) has five subunits: alpha(3), beta(3), gamma(1), delta(1), epsilon(1). CF(0) has three main subunits: a, b and c.

It localises to the cell inner membrane. Functionally, produces ATP from ADP in the presence of a proton gradient across the membrane. The sequence is that of ATP synthase epsilon chain from Haemophilus influenzae (strain 86-028NP).